The following is a 27-amino-acid chain: WDVNDCIHFCLIGVVERSYTECHTMCT.

Disulfide bonds link Cys6–Cys26 and Cys10–Cys22.

As to expression, expressed by the venom duct.

It localises to the secreted. The sequence is that of Conotoxin flf14a from Conus anabathrum floridanus (Florida cone).